A 250-amino-acid polypeptide reads, in one-letter code: Iron-sulfur assembly protein 1 (250 aa).

The interval 54 to 89 is disordered; that stretch reads AADSVSPDSQRPGKKPFKFIVSNQSKSSKASKSPKW. Low complexity predominate over residues 75 to 89; it reads SNQSKSSKASKSPKW. Residues Cys178, Cys242, and Cys244 each coordinate Fe cation.

It belongs to the HesB/IscA family.

It is found in the mitochondrion matrix. Its function is as follows. Involved in the assembly of mitochondrial and cytoplasmic iron-sulfur proteins. Probably involved in the binding of an intermediate of Fe/S cluster assembly. The chain is Iron-sulfur assembly protein 1 (ISA1) from Saccharomyces cerevisiae (strain ATCC 204508 / S288c) (Baker's yeast).